A 361-amino-acid chain; its full sequence is Alanine racemase (361 aa).

Residue Lys34 is the Proton acceptor; specific for D-alanine of the active site. Lys34 is modified (N6-(pyridoxal phosphate)lysine). Position 129 (Arg129) interacts with substrate. Catalysis depends on Tyr254, which acts as the Proton acceptor; specific for L-alanine. Met302 contacts substrate.

Belongs to the alanine racemase family. It depends on pyridoxal 5'-phosphate as a cofactor.

The catalysed reaction is L-alanine = D-alanine. The enzyme catalyses L-serine = D-serine. It participates in amino-acid biosynthesis; D-alanine biosynthesis; D-alanine from L-alanine: step 1/1. Functionally, catalyzes the interconversion of L-alanine and D-alanine. Likely plays an important role in supplying D-alanine, which is an indispensable constituent in the biosynthesis of bacterial cell-wall peptidoglycan. To a lesser extent, is also able to racemize L-serine and D-serine. Does not act on other proteinogenic amino-acids. This chain is Alanine racemase (alr1), found in Vibrio cholerae serotype O1 (strain ATCC 39315 / El Tor Inaba N16961).